Here is a 208-residue protein sequence, read N- to C-terminus: Ribonuclease HII (208 aa).

In terms of domain architecture, RNase H type-2 spans 11–203 (GPVAGVDEAG…VAAAHEQWLK (193 aa)). Asp-17, Glu-18, and Asp-112 together coordinate a divalent metal cation.

It belongs to the RNase HII family. The cofactor is Mn(2+). It depends on Mg(2+) as a cofactor.

It is found in the cytoplasm. The enzyme catalyses Endonucleolytic cleavage to 5'-phosphomonoester.. In terms of biological role, endonuclease that specifically degrades the RNA of RNA-DNA hybrids. The chain is Ribonuclease HII from Corynebacterium jeikeium (strain K411).